A 776-amino-acid polypeptide reads, in one-letter code: E3 ubiquitin-protein ligase UHRF1 (776 aa).

One can recognise a Ubiquitin-like domain in the interval 1 to 78 (MWIQVRTMDG…VQLLVRQAVA (78 aa)). Residues 88–126 (AELSDSDSGCGSAQSESDKGSTHGESDVQSAGASGQTDT) are disordered. A compositionally biased stretch (polar residues) spans 93 to 102 (SDSGCGSAQS). The segment covering 103–113 (ESDKGSTHGES) has biased composition (basic and acidic residues). Residues 114–126 (DVQSAGASGQTDT) are compositionally biased toward polar residues. 2 tudor-like regions span residues 135–201 (GFYK…PRAR) and 208–277 (QLEP…IEEP). Residues 278-298 (GSAEGPGASSDSPLKKGSNGP) are disordered. Residues 290–299 (PLKKGSNGPE) are linker. A PHD-type zinc finger spans residues 297 to 364 (GPECKVCKDD…DWYCPDCRND (68 aa)). Histone H3R2me0 binding stretches follow at residues 331-335 (CDECD) and 351-353 (PDD). A YDG domain is found at 417–580 (GPVPGVPVGT…FLVWRYLLKR (164 aa)). The required to promote base flipping stretch occupies residues 443–444 (HV). DNA contacts are provided by residues 461 to 462 (AG) and Asp-467. Required for formation of a 5-methylcytosine-binding pocket regions lie at residues 464 to 467 (YEDD) and 476 to 479 (YTGS). The disordered stretch occupies residues 617 to 660 (EKEKENKNEDDIEETPTKGKRKRKSQSMEEKSSPTKGTPKKMKV). At Ser-649 the chain carries Phosphoserine; by CDK2. The segment at 706-745 (CICCQEVVYQPITTECQHNVCRECLQRSFKAKVYTCPACR) adopts an RING-type zinc-finger fold.

Phosphorylation at Ser-649 is required for gastrulation. In terms of tissue distribution, expressed in proliferating tissues. Highly expressed 24-48 hours after fertilization (hpf) in rapidly proliferating tissues, including the tectum, retina and brachial arches. Preferentially expressed in the liver bud and expression is maintained in the fully developed liver. Also expressed in the proximal gut. In adult, the highest expression is detected in testis.

The protein localises to the nucleus. The protein resides in the cytoplasm. The enzyme catalyses S-ubiquitinyl-[E2 ubiquitin-conjugating enzyme]-L-cysteine + [acceptor protein]-L-lysine = [E2 ubiquitin-conjugating enzyme]-L-cysteine + N(6)-ubiquitinyl-[acceptor protein]-L-lysine.. Its pathway is protein modification; protein ubiquitination. Multidomain protein that acts as a key epigenetic regulator by bridging DNA methylation and chromatin modification. Specifically recognizes and binds hemimethylated DNA at replication forks via its YDG domain and recruits dnmt1 methyltransferase to ensure faithful propagation of the DNA methylation patterns through DNA replication. In addition to its role in maintenance of DNA methylation, also plays a key role in chromatin modification: through its tudor-like regions and PHD-type zinc fingers, specifically recognizes and binds histone H3 trimethylated at 'Lys-9' (H3K9me3) and unmethylated at 'Arg-2' (H3R2me0), respectively, and recruits chromatin proteins. Enriched in pericentric heterochromatin where it recruits different chromatin modifiers required for this chromatin replication. Also localizes to euchromatic regions where it negatively regulates transcription possibly by impacting DNA methylation and histone modifications. Has E3 ubiquitin-protein ligase activity by mediating the ubiquitination of target proteins. However, it is still unclear how E3 ubiquitin-protein ligase activity is related to its role in chromatin in vivo. Required for pregastrula and lens development. This Danio rerio (Zebrafish) protein is E3 ubiquitin-protein ligase UHRF1 (uhrf1).